An 874-amino-acid polypeptide reads, in one-letter code: Translation initiation factor IF-2 (874 aa).

Residues 1–289 form a disordered region; sequence MKIKNAQLTK…KHYDEHSVQR (289 aa). Residues 31–48 show a composition bias toward basic and acidic residues; it reads SSSEKPTTKVPEKVAKEK. Polar residues predominate over residues 81–104; sequence RSSFASEDSTIPSPVSVDTESTAF. Over residues 105 to 118 the composition is skewed to low complexity; sequence SPPVVEEVVSPLES. Basic and acidic residues-rich tracts occupy residues 144 to 158 and 186 to 198; these read PPKK…KEPP and PKKE…KERT. Over residues 199 to 211 the composition is skewed to polar residues; it reads GTVQTKPQQSSEV. Positions 228 to 260 are enriched in basic and acidic residues; the sequence is YRRDTSKRPGSDFRDRSKKDDSPKAFTGRDRYG. The span at 271–280 shows a compositional bias: basic residues; sequence RKKRVQKTKK. The tr-type G domain maps to 380-549; the sequence is IRPPIVAFMG…ALQAEVLELK (170 aa). Positions 389–396 are G1; sequence GHVDHGKT. GTP is bound at residue 389-396; the sequence is GHVDHGKT. The interval 414 to 418 is G2; the sequence is AITQH. A G3 region spans residues 435–438; sequence DTPG. GTP contacts are provided by residues 435–439 and 489–492; these read DTPGH and NKCD. Residues 489 to 492 are G4; the sequence is NKCD. Residues 525–527 are G5; the sequence is SAK.

It belongs to the TRAFAC class translation factor GTPase superfamily. Classic translation factor GTPase family. IF-2 subfamily.

Its subcellular location is the cytoplasm. In terms of biological role, one of the essential components for the initiation of protein synthesis. Protects formylmethionyl-tRNA from spontaneous hydrolysis and promotes its binding to the 30S ribosomal subunits. Also involved in the hydrolysis of GTP during the formation of the 70S ribosomal complex. This Chlamydia abortus (strain DSM 27085 / S26/3) (Chlamydophila abortus) protein is Translation initiation factor IF-2.